A 304-amino-acid chain; its full sequence is N-acetyllactosaminide alpha-2,3-sialyltransferase (304 aa).

Residues 221 to 225, 242 to 243, and 262 to 263 contribute to the CMP-N-acetyl-beta-neuraminate site; these read FPHPA, FE, and SS. His-223 (proton donor) is an active-site residue.

The protein belongs to the glycosyltransferase 52 family.

It carries out the reaction a beta-D-galactosyl-(1-&gt;4)-N-acetyl-beta-D-glucosaminyl derivative + CMP-N-acetyl-beta-neuraminate = an N-acetyl-alpha-neuraminyl-(2-&gt;3)-beta-D-galactosyl-(1-&gt;4)-N-acetyl-beta-D-glucosaminyl derivative + CMP + H(+). It functions in the pathway bacterial outer membrane biogenesis; lipooligosaccharide biosynthesis. Catalyzes the transfer of sialic acid from the substrate CMP-N-acetylneuraminate to the terminal galactose residue of the N-acetyllactosamine moiety of surface lipooligosaccharide (LOS). Thus, functions in the sialylation of LOS, which plays a role in the evasion of the host immune response. The sequence is that of N-acetyllactosaminide alpha-2,3-sialyltransferase from Haemophilus influenzae (strain ATCC 51907 / DSM 11121 / KW20 / Rd).